A 598-amino-acid chain; its full sequence is Elongation factor 4 (598 aa).

Positions 4 to 186 constitute a tr-type G domain; sequence SHIRNFSIIA…VIVNKIPPPE (183 aa). GTP is bound by residues 16 to 21 and 133 to 136; these read DHGKST and NKID.

It belongs to the TRAFAC class translation factor GTPase superfamily. Classic translation factor GTPase family. LepA subfamily.

It is found in the cell inner membrane. It carries out the reaction GTP + H2O = GDP + phosphate + H(+). Functionally, required for accurate and efficient protein synthesis under certain stress conditions. May act as a fidelity factor of the translation reaction, by catalyzing a one-codon backward translocation of tRNAs on improperly translocated ribosomes. Back-translocation proceeds from a post-translocation (POST) complex to a pre-translocation (PRE) complex, thus giving elongation factor G a second chance to translocate the tRNAs correctly. Binds to ribosomes in a GTP-dependent manner. The chain is Elongation factor 4 from Alteromonas mediterranea (strain DSM 17117 / CIP 110805 / LMG 28347 / Deep ecotype).